The chain runs to 84 residues: Subtilisin-chymotrypsin inhibitor-2A (84 aa).

The tract at residues 1-23 (MSSVEKKPEGVNTGAGDRHNLKT) is disordered.

This sequence belongs to the protease inhibitor I13 (potato type I serine protease inhibitor) family.

Inhibits both subtilisin and chymotrypsin. The polypeptide is Subtilisin-chymotrypsin inhibitor-2A (Hordeum vulgare (Barley)).